We begin with the raw amino-acid sequence, 498 residues long: MTEDIRVRYAPSPTGHLHIGNARTAIFNWLFARHYNGKFIIRIEDTDSARNIADGEKSQLENLAWLGLDWDESPEKPGEYGPYRQSERNEQGIYQPFIDKLLTEGLAYKSYKTSEQLASEREAQQAAKQAPHYVYEYEGLTREEREAKYAEFEAKGLKPVVRFRVPEEKTYAWDDIVKGHIEIGAKEVGGDWVIQKADGMPTYNFAVVVDDHMMKISHVLRGDDHVSNTPKQMMIFEALGWDIPQFGHMALIINGETGKKLSKRDENVLQFVEQYKALGYQPQAMVNFIGLLGWSPKGEDEIFSLEEFKQMFDETRLSKANAKFDQKKLEWINNQWMRRDLEEIMPQLIQELVTANLVSPADATAKADWLAQVIKVAGVEGISYTREIVDLVRQPFFELGDITDEMVAYLTSEEGRRVFDAWESAYIALPDDATAEDYLNAIRGIQNQLEIKGRNLWNPIRIATTHEVQGPNLPEMLVVLDKATVLQTMADVKSNYLN.

The 'HIGH' region signature appears at 11 to 21 (PSPTGHLHIGN). The 'KMSKS' region motif lies at 260–264 (KLSKR). K263 contributes to the ATP binding site.

This sequence belongs to the class-I aminoacyl-tRNA synthetase family. Glutamate--tRNA ligase type 1 subfamily. Monomer.

The protein localises to the cytoplasm. It catalyses the reaction tRNA(Glu) + L-glutamate + ATP = L-glutamyl-tRNA(Glu) + AMP + diphosphate. Functionally, catalyzes the attachment of glutamate to tRNA(Glu) in a two-step reaction: glutamate is first activated by ATP to form Glu-AMP and then transferred to the acceptor end of tRNA(Glu). The chain is Glutamate--tRNA ligase from Leuconostoc citreum (strain KM20).